A 200-amino-acid chain; its full sequence is MRLTGRGLRCVRGGRQVFAGLDVDAAAGEAVAVVGANGAGKTSLLRLIAGLLALAGGAIALEGGDSELTLAEQAHYLGHRDALKPSLSVAENLIFWQQFLGGEPADAQASLAAVGLGHIAHLPAAYLSAGQRRRLSLARLTAVRRPLWLLDEPTSALDAEGQAMFARLMTAHLESGGLLVAATHTPLGIAARELRIGGAA.

The 199-residue stretch at 1–199 (MRLTGRGLRC…AARELRIGGA (199 aa)) folds into the ABC transporter domain. 35–42 (GANGAGKT) provides a ligand contact to ATP.

It belongs to the ABC transporter superfamily. CcmA exporter (TC 3.A.1.107) family. The complex is composed of two ATP-binding proteins (CcmA) and two transmembrane proteins (CcmB).

It localises to the cell inner membrane. The enzyme catalyses heme b(in) + ATP + H2O = heme b(out) + ADP + phosphate + H(+). Its function is as follows. Part of the ABC transporter complex CcmAB involved in the biogenesis of c-type cytochromes; once thought to export heme, this seems not to be the case, but its exact role is uncertain. Responsible for energy coupling to the transport system. The protein is Cytochrome c biogenesis ATP-binding export protein CcmA of Rhodopseudomonas palustris (strain BisB18).